The chain runs to 299 residues: Tyrosine recombinase XerC (299 aa).

In terms of domain architecture, Core-binding (CB) spans 1–85 (MERQLEAYCA…AVRGLYRYLN (85 aa)). A Tyr recombinase domain is found at 106–285 (RLPKTLDTDR…DFQHLAAVYD (180 aa)). Active-site residues include Arg-146, Lys-170, His-237, Arg-240, and His-263. Tyr-272 serves as the catalytic O-(3'-phospho-DNA)-tyrosine intermediate.

Belongs to the 'phage' integrase family. XerC subfamily. Forms a cyclic heterotetrameric complex composed of two molecules of XerC and two molecules of XerD.

Its subcellular location is the cytoplasm. In terms of biological role, site-specific tyrosine recombinase, which acts by catalyzing the cutting and rejoining of the recombining DNA molecules. The XerC-XerD complex is essential to convert dimers of the bacterial chromosome into monomers to permit their segregation at cell division. It also contributes to the segregational stability of plasmids. The protein is Tyrosine recombinase XerC of Pseudomonas entomophila (strain L48).